Here is a 243-residue protein sequence, read N- to C-terminus: Pyridoxine 5'-phosphate synthase (243 aa).

Asparagine 9 provides a ligand contact to 3-amino-2-oxopropyl phosphate. Aspartate 11–histidine 12 serves as a coordination point for 1-deoxy-D-xylulose 5-phosphate. Arginine 20 provides a ligand contact to 3-amino-2-oxopropyl phosphate. Histidine 45 acts as the Proton acceptor in catalysis. The 1-deoxy-D-xylulose 5-phosphate site is built by arginine 47 and histidine 52. The active-site Proton acceptor is the glutamate 72. Threonine 102 lines the 1-deoxy-D-xylulose 5-phosphate pocket. Histidine 193 (proton donor) is an active-site residue. 3-amino-2-oxopropyl phosphate contacts are provided by residues glycine 194 and glycine 215–histidine 216.

It belongs to the PNP synthase family. Homooctamer; tetramer of dimers.

The protein localises to the cytoplasm. It carries out the reaction 3-amino-2-oxopropyl phosphate + 1-deoxy-D-xylulose 5-phosphate = pyridoxine 5'-phosphate + phosphate + 2 H2O + H(+). The protein operates within cofactor biosynthesis; pyridoxine 5'-phosphate biosynthesis; pyridoxine 5'-phosphate from D-erythrose 4-phosphate: step 5/5. Its function is as follows. Catalyzes the complicated ring closure reaction between the two acyclic compounds 1-deoxy-D-xylulose-5-phosphate (DXP) and 3-amino-2-oxopropyl phosphate (1-amino-acetone-3-phosphate or AAP) to form pyridoxine 5'-phosphate (PNP) and inorganic phosphate. The chain is Pyridoxine 5'-phosphate synthase from Vibrio parahaemolyticus serotype O3:K6 (strain RIMD 2210633).